The chain runs to 151 residues: Small ribosomal subunit protein uS19 (151 aa).

Position 2 is an N-acetylalanine (Ala2).

Belongs to the universal ribosomal protein uS19 family.

Negatively regulates lifespan. This is Small ribosomal subunit protein uS19 from Caenorhabditis elegans.